The primary structure comprises 173 residues: Ferritin-1 heavy chain (173 aa).

Residues Q6–G155 enclose the Ferritin-like diiron domain. Fe cation contacts are provided by E23, E58, H61, E103, and Q137.

This sequence belongs to the ferritin family. Oligomer of 24 subunits. The functional molecule forms a roughly spherical shell with a diameter of 12 nm and contains a central cavity into which the insoluble mineral iron core is deposited.

It catalyses the reaction 4 Fe(2+) + O2 + 4 H(+) = 4 Fe(3+) + 2 H2O. Stores iron in a soluble, non-toxic, readily available form. Important for iron homeostasis. Has ferroxidase activity. Iron is taken up in the ferrous form and deposited as ferric hydroxides after oxidation. The polypeptide is Ferritin-1 heavy chain (SCM-1) (Schistosoma mansoni (Blood fluke)).